The sequence spans 375 residues: Growth/differentiation factor 8 (375 aa).

Positions 1–18 (MQKLQISVYIYLFMLIVA) are cleaved as a signal peptide. A propeptide spanning residues 19–266 (GPVDLNENSE…VTDTPKRSRR (248 aa)) is cleaved from the precursor. N-linked (GlcNAc...) asparagine glycosylation is present at Asn-71. 4 disulfides stabilise this stretch: Cys-272–Cys-282, Cys-281–Cys-340, Cys-309–Cys-372, and Cys-313–Cys-374.

Belongs to the TGF-beta family. In terms of assembly, homodimer; disulfide-linked. Interacts with WFIKKN2, leading to inhibit its activity. Interacts with FSTL3. In terms of processing, synthesized as large precursor molecule that undergoes proteolytic cleavage to generate an N-terminal propeptide and a disulfide linked C-terminal dimer, which is the biologically active molecule. The circulating form consists of a latent complex of the C-terminal dimer and other proteins, including its propeptide, which maintain the C-terminal dimer in a latent, inactive state. Ligand activation requires additional cleavage of the prodomain by a tolloid-like metalloproteinase.

It is found in the secreted. Acts specifically as a negative regulator of skeletal muscle growth. The chain is Growth/differentiation factor 8 (MSTN) from Lepus capensis (Brown hare).